Here is a 601-residue protein sequence, read N- to C-terminus: MSGQRKGYIAKVSGPVVIAKGISDIKMGEVVYVGNEGLLGEVVRVSQDSFAVQVYEDTSGLRPKEPVTATGKLLVAELGPGLMGRVFDGVQRPLKSIEELVGPFVKRGVKVNPLPRNVKWHFKPSVKVGDKVSSGDIIGVVQETPLIEHRVMVPIGVSGKVKEVVPEGDYTVEDPVVILESDGRVVELTMKQEWPVRQPRPYKERLPSEVPLLIGQRIIDTFFPIAKGGAGAIPGGFGTGKTVTLHKVSMYSDSQIVVYIGCGERGNEIAEMLKEFPVLVDPKSGRPIIERSIIIANTSNMPVSAREASIYMGVTIAEYYRDQGYDVTLIADSTSRWAEALREIAGRLGELPVERGYPAYLPDKIAEFYERGGRVKALGSPERSGSVTVLGAVSPPGGDYNEPVTIHTLRFVGTMWALDTDLAYRRHFPAINWLKSFSQYADIIERWWVKNVSPEFPKYRRRALRLLTVASEIEAIASVVGEGALPDDQRLILLTSEIIKEGFLRQTALSGEDVFCKPEKQYWLLKMMMDFFDKSYELIRKRVSIEEILRMPEIYEMMRVKEDERGLQAVKELYERVMAKLDEIAQRHGVTLAVEAEEVVA.

Gly-235 to Thr-242 serves as a coordination point for ATP.

This sequence belongs to the ATPase alpha/beta chains family. As to quaternary structure, has multiple subunits with at least A(3), B(3), C, D, E, F, H, I and proteolipid K(x).

Its subcellular location is the cell membrane. It catalyses the reaction ATP + H2O + 4 H(+)(in) = ADP + phosphate + 5 H(+)(out). In terms of biological role, component of the A-type ATP synthase that produces ATP from ADP in the presence of a proton gradient across the membrane. The A chain is the catalytic subunit. The sequence is that of A-type ATP synthase subunit A from Thermofilum pendens (strain DSM 2475 / Hrk 5).